The primary structure comprises 536 residues: Membrane protein insertase YidC (536 aa).

5 helical membrane passes run Phe-7–Ser-27, Leu-338–Phe-358, Leu-419–Val-439, Leu-453–Ile-473, and Pro-494–Val-514.

It belongs to the OXA1/ALB3/YidC family. Type 1 subfamily. As to quaternary structure, interacts with the Sec translocase complex via SecD. Specifically interacts with transmembrane segments of nascent integral membrane proteins during membrane integration.

The protein resides in the cell membrane. Required for the insertion and/or proper folding and/or complex formation of integral membrane proteins into the membrane. Involved in integration of membrane proteins that insert both dependently and independently of the Sec translocase complex, as well as at least some lipoproteins. Aids folding of multispanning membrane proteins. The polypeptide is Membrane protein insertase YidC (Buchnera aphidicola subsp. Schizaphis graminum (strain Sg)).